We begin with the raw amino-acid sequence, 488 residues long: B-type flagellin (488 aa).

The protein belongs to the bacterial flagellin family. In terms of processing, phosphorylated on tyrosine residue(s).

Its subcellular location is the secreted. It is found in the bacterial flagellum. In terms of biological role, flagellin is the subunit protein which polymerizes to form the filaments of bacterial flagella. The protein is B-type flagellin (fliC) of Pseudomonas aeruginosa (strain ATCC 15692 / DSM 22644 / CIP 104116 / JCM 14847 / LMG 12228 / 1C / PRS 101 / PAO1).